The primary structure comprises 292 residues: Acetylglutamate kinase (292 aa).

Residues 72 to 73 (GG), arginine 94, and asparagine 187 contribute to the substrate site.

Belongs to the acetylglutamate kinase family. ArgB subfamily.

It is found in the cytoplasm. It carries out the reaction N-acetyl-L-glutamate + ATP = N-acetyl-L-glutamyl 5-phosphate + ADP. It participates in amino-acid biosynthesis; L-arginine biosynthesis; N(2)-acetyl-L-ornithine from L-glutamate: step 2/4. Its function is as follows. Catalyzes the ATP-dependent phosphorylation of N-acetyl-L-glutamate. The chain is Acetylglutamate kinase from Trichodesmium erythraeum (strain IMS101).